The primary structure comprises 492 residues: Argininosuccinate lyase (492 aa).

It belongs to the lyase 1 family. Argininosuccinate lyase subfamily.

It localises to the cytoplasm. It catalyses the reaction 2-(N(omega)-L-arginino)succinate = fumarate + L-arginine. The protein operates within amino-acid biosynthesis; L-arginine biosynthesis; L-arginine from L-ornithine and carbamoyl phosphate: step 3/3. The protein is Argininosuccinate lyase of Methanoculleus marisnigri (strain ATCC 35101 / DSM 1498 / JR1).